Consider the following 202-residue polypeptide: MEAFTVHKGIGVPLRRSNVDTDQIIPAVYLKRVTRTGFEDALFAAWRSDPDFILNTEPFNRGTVLVAGPDFGTGSSREHAVWALSDYGFRVVISSRFADIFRGNAGKGGLLAAQMSQNDVEMLWKMIEEQPGLELVVDLRDRTVTAGTVVLPFDIDDYTRWRLLEGLDDIGLTLRRSDVIAEFEKARPTWKPTTLPAPISQA.

The protein belongs to the LeuD family. LeuD type 1 subfamily. In terms of assembly, heterodimer of LeuC and LeuD.

It catalyses the reaction (2R,3S)-3-isopropylmalate = (2S)-2-isopropylmalate. It functions in the pathway amino-acid biosynthesis; L-leucine biosynthesis; L-leucine from 3-methyl-2-oxobutanoate: step 2/4. Its function is as follows. Catalyzes the isomerization between 2-isopropylmalate and 3-isopropylmalate, via the formation of 2-isopropylmaleate. The polypeptide is 3-isopropylmalate dehydratase small subunit (Nocardia farcinica (strain IFM 10152)).